Here is a 727-residue protein sequence, read N- to C-terminus: Elongation factor 2 (727 aa).

Residues 19–260 (DQIRNMGICA…MSIKHLPNPL (242 aa)) enclose the tr-type G domain. Residues 28 to 35 (AHIDHGKT), 94 to 98 (DTPGH), and 148 to 151 (NKVD) each bind GTP. His-603 is modified (diphthamide).

The protein belongs to the TRAFAC class translation factor GTPase superfamily. Classic translation factor GTPase family. EF-G/EF-2 subfamily.

The protein localises to the cytoplasm. Functionally, catalyzes the GTP-dependent ribosomal translocation step during translation elongation. During this step, the ribosome changes from the pre-translocational (PRE) to the post-translocational (POST) state as the newly formed A-site-bound peptidyl-tRNA and P-site-bound deacylated tRNA move to the P and E sites, respectively. Catalyzes the coordinated movement of the two tRNA molecules, the mRNA and conformational changes in the ribosome. The chain is Elongation factor 2 from Methanococcus maripaludis (strain C5 / ATCC BAA-1333).